We begin with the raw amino-acid sequence, 267 residues long: Phosphonates import ATP-binding protein PhnC 2 (267 aa).

The ABC transporter domain maps to 3–247 (LSLDGVDLVH…ALDALYANEQ (245 aa)). 36 to 43 (GPSGAGKT) lines the ATP pocket.

The protein belongs to the ABC transporter superfamily. Phosphonates importer (TC 3.A.1.9.1) family. The complex is composed of two ATP-binding proteins (PhnC), two transmembrane proteins (PhnE) and a solute-binding protein (PhnD).

The protein localises to the cell inner membrane. The catalysed reaction is phosphonate(out) + ATP + H2O = phosphonate(in) + ADP + phosphate + H(+). In terms of biological role, part of the ABC transporter complex PhnCDE involved in phosphonates import. Responsible for energy coupling to the transport system. This is Phosphonates import ATP-binding protein PhnC 2 from Pseudomonas aeruginosa (strain UCBPP-PA14).